Here is a 647-residue protein sequence, read N- to C-terminus: 1-deoxy-D-xylulose-5-phosphate synthase (647 aa).

Residues histidine 88 and 129-131 (GHA) each bind thiamine diphosphate. Aspartate 160 serves as a coordination point for Mg(2+). Thiamine diphosphate is bound by residues 161-162 (GA), asparagine 189, tyrosine 300, and glutamate 377. Asparagine 189 serves as a coordination point for Mg(2+).

The protein belongs to the transketolase family. DXPS subfamily. As to quaternary structure, homodimer. Mg(2+) is required as a cofactor. The cofactor is thiamine diphosphate.

It carries out the reaction D-glyceraldehyde 3-phosphate + pyruvate + H(+) = 1-deoxy-D-xylulose 5-phosphate + CO2. Its pathway is metabolic intermediate biosynthesis; 1-deoxy-D-xylulose 5-phosphate biosynthesis; 1-deoxy-D-xylulose 5-phosphate from D-glyceraldehyde 3-phosphate and pyruvate: step 1/1. Its function is as follows. Catalyzes the acyloin condensation reaction between C atoms 2 and 3 of pyruvate and glyceraldehyde 3-phosphate to yield 1-deoxy-D-xylulose-5-phosphate (DXP). The chain is 1-deoxy-D-xylulose-5-phosphate synthase from Dehalococcoides mccartyi (strain CBDB1).